A 161-amino-acid chain; its full sequence is Large ribosomal subunit protein uL16 (161 aa).

The interval 140-161 (LNKGNYKPAKTPVTADDSESSS) is disordered.

Belongs to the universal ribosomal protein uL16 family. As to quaternary structure, part of the 50S ribosomal subunit.

Binds 23S rRNA and is also seen to make contacts with the A and possibly P site tRNAs. The polypeptide is Large ribosomal subunit protein uL16 (Prochlorococcus marinus (strain NATL2A)).